A 214-amino-acid chain; its full sequence is Uracil phosphoribosyltransferase (214 aa).

5-phospho-alpha-D-ribose 1-diphosphate is bound by residues arginine 81, arginine 106, and 133 to 141; that span reads DPMLATGNS. Uracil is bound by residues isoleucine 196 and 201-203; that span reads GDA. Aspartate 202 is a binding site for 5-phospho-alpha-D-ribose 1-diphosphate.

It belongs to the UPRTase family. The cofactor is Mg(2+).

The catalysed reaction is UMP + diphosphate = 5-phospho-alpha-D-ribose 1-diphosphate + uracil. It functions in the pathway pyrimidine metabolism; UMP biosynthesis via salvage pathway; UMP from uracil: step 1/1. Its activity is regulated as follows. Allosterically activated by GTP. Functionally, catalyzes the conversion of uracil and 5-phospho-alpha-D-ribose 1-diphosphate (PRPP) to UMP and diphosphate. The protein is Uracil phosphoribosyltransferase of Legionella pneumophila subsp. pneumophila (strain Philadelphia 1 / ATCC 33152 / DSM 7513).